Reading from the N-terminus, the 310-residue chain is Protein OS-9 homolog (310 aa).

An N-terminal signal peptide occupies residues 1-40 (MFSSSMFPHLILPAIGSSKVRTMVLPFAFVGFFIFPICLA). Residues Asn60, Asn97, and Asn104 are each glycosylated (N-linked (GlcNAc...) asparagine). An MRH domain is found at 129–255 (NVFLIENRGY…TIHVPGLCSL (127 aa)). The a mannooligosaccharide derivative site is built by Trp139 and Gln151. N-linked (GlcNAc...) asparagine glycosylation occurs at Asn204. 2 disulfide bridges follow: Cys208–Cys241 and Cys223–Cys253. Asp209, Arg215, Glu237, and Tyr243 together coordinate a mannooligosaccharide derivative. Composition is skewed to basic and acidic residues over residues 282–292 (VDHKDSQHVVD) and 301–310 (EVKEVETQSS). Positions 282-310 (VDHKDSQHVVDEVAQTSPPEVKEVETQSS) are disordered.

Belongs to the OS-9 family. As to quaternary structure, interacts with missfolded ER lumenal proteins.

The protein localises to the endoplasmic reticulum membrane. In terms of biological role, lectin involved in the quality control of the secretory pathway. As a member of the endoplasmic reticulum-associated degradation lumenal (ERAD-L) surveillance system, targets misfolded endoplasmic reticulum lumenal glycoproteins for degradation. This chain is Protein OS-9 homolog (yos9), found in Schizosaccharomyces pombe (strain 972 / ATCC 24843) (Fission yeast).